Here is a 163-residue protein sequence, read N- to C-terminus: NADH-quinone oxidoreductase subunit I (163 aa).

4Fe-4S ferredoxin-type domains follow at residues 53 to 83 (LRRY…IEAG) and 94 to 123 (VRYD…EGPN). Residues Cys-63, Cys-66, Cys-69, Cys-73, Cys-103, Cys-106, Cys-109, and Cys-113 each coordinate [4Fe-4S] cluster.

Belongs to the complex I 23 kDa subunit family. In terms of assembly, NDH-1 is composed of 14 different subunits. Subunits NuoA, H, J, K, L, M, N constitute the membrane sector of the complex. It depends on [4Fe-4S] cluster as a cofactor.

The protein localises to the cell inner membrane. The catalysed reaction is a quinone + NADH + 5 H(+)(in) = a quinol + NAD(+) + 4 H(+)(out). Its function is as follows. NDH-1 shuttles electrons from NADH, via FMN and iron-sulfur (Fe-S) centers, to quinones in the respiratory chain. The immediate electron acceptor for the enzyme in this species is believed to be ubiquinone. Couples the redox reaction to proton translocation (for every two electrons transferred, four hydrogen ions are translocated across the cytoplasmic membrane), and thus conserves the redox energy in a proton gradient. The sequence is that of NADH-quinone oxidoreductase subunit I from Brucella abortus (strain S19).